A 500-amino-acid polypeptide reads, in one-letter code: 7-alpha-hydroxycholest-4-en-3-one 12-alpha-hydroxylase (500 aa).

A helical membrane pass occupies residues 4 to 24 (WCTVLGALLTVVGCLCLSLLL). Serine 325 is modified (phosphoserine). Residue cysteine 439 coordinates heme.

It belongs to the cytochrome P450 family. Heme is required as a cofactor. As to expression, expressed in liver.

Its subcellular location is the endoplasmic reticulum membrane. The protein localises to the microsome membrane. The catalysed reaction is 7alpha-hydroxycholest-4-en-3-one + reduced [NADPH--hemoprotein reductase] + O2 = 7alpha,12alpha-dihydroxycholest-4-en-3-one + oxidized [NADPH--hemoprotein reductase] + H2O + H(+). The enzyme catalyses 5beta-cholestane-3alpha,7alpha-diol + reduced [NADPH--hemoprotein reductase] + O2 = 5beta-cholestane-3alpha,7alpha,12alpha-triol + oxidized [NADPH--hemoprotein reductase] + H2O + H(+). It carries out the reaction chenodeoxycholate + reduced [NADPH--hemoprotein reductase] + O2 = cholate + oxidized [NADPH--hemoprotein reductase] + H2O + H(+). Its pathway is lipid metabolism; bile acid biosynthesis. Its function is as follows. A cytochrome P450 monooxygenase involved in primary bile acid biosynthesis. Catalyzes the 12alpha-hydroxylation of 7alpha-hydroxy-4-cholesten-3-one, an intermediate metabolite in cholic acid biosynthesis. Controls biliary balance of cholic acid and chenodeoxycholic acid, ultimately regulating the intestinal absorption of dietary lipids. Mechanistically, uses molecular oxygen inserting one oxygen atom into a substrate, and reducing the second into a water molecule, with two electrons provided by NADPH via cytochrome P450 reductase (CPR; NADPH--hemoprotein reductase). The chain is 7-alpha-hydroxycholest-4-en-3-one 12-alpha-hydroxylase (Cyp8b1) from Mus musculus (Mouse).